Reading from the N-terminus, the 213-residue chain is Ribonuclease HII (213 aa).

An RNase H type-2 domain is found at 18–213 (GLYAGVDEVG…RPVKERLAKN (196 aa)). Residues D24, E25, and D116 each coordinate a divalent metal cation.

It belongs to the RNase HII family. The cofactor is Mn(2+). Requires Mg(2+) as cofactor.

It localises to the cytoplasm. It catalyses the reaction Endonucleolytic cleavage to 5'-phosphomonoester.. Its function is as follows. Endonuclease that specifically degrades the RNA of RNA-DNA hybrids. The protein is Ribonuclease HII of Shewanella sediminis (strain HAW-EB3).